Here is a 252-residue protein sequence, read N- to C-terminus: Imidazole glycerol phosphate synthase subunit HisF (252 aa).

Active-site residues include Asp-11 and Asp-130.

Belongs to the HisA/HisF family. Heterodimer of HisH and HisF.

It is found in the cytoplasm. It carries out the reaction 5-[(5-phospho-1-deoxy-D-ribulos-1-ylimino)methylamino]-1-(5-phospho-beta-D-ribosyl)imidazole-4-carboxamide + L-glutamine = D-erythro-1-(imidazol-4-yl)glycerol 3-phosphate + 5-amino-1-(5-phospho-beta-D-ribosyl)imidazole-4-carboxamide + L-glutamate + H(+). The protein operates within amino-acid biosynthesis; L-histidine biosynthesis; L-histidine from 5-phospho-alpha-D-ribose 1-diphosphate: step 5/9. Functionally, IGPS catalyzes the conversion of PRFAR and glutamine to IGP, AICAR and glutamate. The HisF subunit catalyzes the cyclization activity that produces IGP and AICAR from PRFAR using the ammonia provided by the HisH subunit. The sequence is that of Imidazole glycerol phosphate synthase subunit HisF from Alkaliphilus metalliredigens (strain QYMF).